A 209-amino-acid chain; its full sequence is Ribosomal RNA large subunit methyltransferase E (209 aa).

S-adenosyl-L-methionine is bound by residues glycine 63, tryptophan 65, aspartate 83, aspartate 99, and aspartate 124. Lysine 164 acts as the Proton acceptor in catalysis.

The protein belongs to the class I-like SAM-binding methyltransferase superfamily. RNA methyltransferase RlmE family.

Its subcellular location is the cytoplasm. It catalyses the reaction uridine(2552) in 23S rRNA + S-adenosyl-L-methionine = 2'-O-methyluridine(2552) in 23S rRNA + S-adenosyl-L-homocysteine + H(+). Its function is as follows. Specifically methylates the uridine in position 2552 of 23S rRNA at the 2'-O position of the ribose in the fully assembled 50S ribosomal subunit. This Shewanella putrefaciens (strain CN-32 / ATCC BAA-453) protein is Ribosomal RNA large subunit methyltransferase E.